The primary structure comprises 206 residues: Ras-related protein Ral-A (206 aa).

21–28 contacts GTP; the sequence is GSGGVGKS. An Effector region motif is present at residues 43–51; sequence YEPTKADSY. GTP is bound by residues 68 to 72 and 127 to 130; these read DTAGQ and NKSD. Position 194 is a phosphoserine (Ser-194). The residue at position 203 (Cys-203) is a Cysteine methyl ester. A lipid anchor (S-geranylgeranyl cysteine) is attached at Cys-203. Residues 204–206 constitute a propeptide, removed in mature form; the sequence is CIL.

It belongs to the small GTPase superfamily. Ras family. Interacts (via effector domain) with RALBP1; during mitosis, recruits RALBP1 to the mitochondrion where it promotes DNM1L phosphorylation and mitochondrial fission. Interacts with EXOC2/Sec5 and EXOC8/Exo84; binding to EXOC2 and EXOC8 is mutually exclusive. Interacts with Clostridium exoenzyme C3. Interacts with RALGPS1. Interacts with LPAR1 and LPAR2. Interacts with GRK2 in response to LPAR1 activation. RALA and GRK2 binding to LPAR1 is mutually exclusive. Interacts with CDC42. In terms of processing, prenylation is essential for membrane localization. Post-translationally, phosphorylated. Phosphorylation at Ser-194 by AURKA/Aurora kinase A, during mitosis, induces RALA localization to the mitochondrion where it regulates mitochondrial fission.

The protein resides in the cell membrane. It localises to the cleavage furrow. It is found in the midbody. The protein localises to the midbody ring. Its subcellular location is the mitochondrion. It carries out the reaction GTP + H2O = GDP + phosphate + H(+). Its activity is regulated as follows. Alternates between an inactive form bound to GDP and an active form bound to GTP. Activated by a guanine nucleotide-exchange factor (GEF) and inactivated by a GTPase-activating protein (GAP). Multifunctional GTPase involved in a variety of cellular processes including gene expression, cell migration, cell proliferation, oncogenic transformation and membrane trafficking. Accomplishes its multiple functions by interacting with distinct downstream effectors. Acts as a GTP sensor for GTP-dependent exocytosis of dense core vesicles. Key regulator of LPAR1 signaling and competes with GRK2 for binding to LPAR1 thus affecting the signaling properties of the receptor. Required for anchorage-independent proliferation of transformed cells. The RALA-exocyst complex regulates integrin-dependent membrane raft exocytosis and growth signaling. During mitosis, supports the stabilization and elongation of the intracellular bridge between dividing cells. Cooperates with EXOC2 to recruit other components of the exocyst to the early midbody. During mitosis, also controls mitochondrial fission by recruiting to the mitochondrion RALBP1, which mediates the phosphorylation and activation of DNM1L by the mitotic kinase cyclin B-CDK1. In Mus musculus (Mouse), this protein is Ras-related protein Ral-A (Rala).